Consider the following 2217-residue polypeptide: Protein irg-7 (2217 aa).

An N-terminal signal peptide occupies residues 1–16 (MRNWVLIAALAVICLA). EGF-like domains lie at 370–405 (SGSTCSQMLCANGGFLPTPTSDRCQCPEGFSGFHCQ) and 864–896 (TGTYCQNIICYNGGTASGDHCVCPPGYAGESCE). 8 cysteine pairs are disulfide-bonded: C379-C393, C395-C404, C868-C873, C886-C895, C1212-C1312, C1285-C1304, C1508-C1521, and C1523-C1532. The C-type lectin domain maps to 1188–1313 (IGQYCIKFMA…CAEPRAFACQ (126 aa)). The EGF-like 3 domain occupies 1499 to 1533 (TGSRCTVPICVNGGTRNPDEATCSCPDGYEGPNCQ). In terms of domain architecture, VWFA spans 2016–2202 (DVVFMIDGSQ…NNQIKTIQQL (187 aa)).

It localises to the secreted. Functionally, plays a role in innate immunity, probably via the atf-7 pathway, to confer resistance to pathogenic bacteria. May also play a role in the regulation of longevity. This chain is Protein irg-7, found in Caenorhabditis elegans.